The chain runs to 1380 residues: Receptor-type adenylate cyclase A (1380 aa).

The Cytoplasmic portion of the chain corresponds to 1-34 (MAMQIRPSLGGCLRHGGAGDHAARRLSRLRAAKV). The helical transmembrane segment at 35 to 55 (FVPTAVVCVLLCCAPWVMAEI) threads the bilayer. At 56–891 (TNDAEREPVY…SHALTPAQRN (836 aa)) the chain is on the extracellular side. N422, N478, N497, and N567 each carry an N-linked (GlcNAc...) asparagine glycan. A helical transmembrane segment spans residues 892 to 912 (GLIAGCVVGAVVLIATCTLLL). Residues 913–1380 (YCCMDNRNND…NPHYARHAFE (468 aa)) lie on the Cytoplasmic side of the membrane. In terms of domain architecture, Guanylate cyclase spans 933–1087 (TLLFTDIESS…DTSNMAARTE (155 aa)). Mg(2+) is bound by residues D938 and D981. Positions 1270-1298 (LAREGDSAAGGVRPRLPGSPVTSLPAGGS) are disordered.

Belongs to the adenylyl cyclase class-3 family. Requires Mg(2+) as cofactor.

Its subcellular location is the membrane. The enzyme catalyses ATP = 3',5'-cyclic AMP + diphosphate. Its function is as follows. Could act as a receptor for an unknown ligand. The sequence is that of Receptor-type adenylate cyclase A (RAC-A) from Leishmania donovani.